Here is a 550-residue protein sequence, read N- to C-terminus: Hydroxylamine reductase (550 aa).

4 residues coordinate [2Fe-2S] cluster: Cys3, Cys6, Cys18, and Cys25. Hybrid [4Fe-2O-2S] cluster contacts are provided by His249, Glu273, Cys317, Cys405, Cys433, Cys458, Glu492, and Lys494. A Cysteine persulfide modification is found at Cys405.

It belongs to the HCP family. The cofactor is [2Fe-2S] cluster. Hybrid [4Fe-2O-2S] cluster serves as cofactor.

The protein resides in the cytoplasm. It carries out the reaction A + NH4(+) + H2O = hydroxylamine + AH2 + H(+). In terms of biological role, catalyzes the reduction of hydroxylamine to form NH(3) and H(2)O. The sequence is that of Hydroxylamine reductase from Pectobacterium carotovorum subsp. carotovorum (strain PC1).